The chain runs to 62 residues: uncharacterized protein (62 aa).

A disordered region spans residues 1 to 26 (MGELAASANHGHSPCYPERKGTPGDL). Residues 17–26 (PERKGTPGDL) show a composition bias toward basic and acidic residues.

This is an uncharacterized protein from Homo sapiens (Human).